We begin with the raw amino-acid sequence, 366 residues long: MTPEHLPTEQYEAQLAEKVVRLQSMMAPFSDLVPEVFRSPVSHYRMRAEFRIWHDGDDLYHIIFDQQTKSRIRVDSFPAASELINQLMTAMIAGVRNNPVLRHKLFQIDYLTTLSNQAVVSLLYHKKLDDEWRQEAEALRDALRAQNLNVHLIGRATKTKIALDQDYIDERLPVAGKEMIYRQVENSFTQPNAAMNIQMLEWALDVTKGSKGDLLELYCGNGNFSLALARNFDRVLATEIAKPSVAAAQYNIAANHIDNVQIIRMAAEEFTQAMNGVREFNRLQGIDLKSYQCETIFVDPPRSGLDSETEKMVQAYPRILYISCNPETLCKNLETLSQTHKVERLALFDQFPYTHHMECSVLLTAK.

S-adenosyl-L-methionine is bound by residues Gln-190, Tyr-218, Asn-223, Glu-239, and Asp-299. Cys-324 functions as the Nucleophile in the catalytic mechanism. The active-site Proton acceptor is Glu-358.

This sequence belongs to the class I-like SAM-binding methyltransferase superfamily. RNA M5U methyltransferase family. TrmA subfamily.

The enzyme catalyses uridine(54) in tRNA + S-adenosyl-L-methionine = 5-methyluridine(54) in tRNA + S-adenosyl-L-homocysteine + H(+). The catalysed reaction is uridine(341) in tmRNA + S-adenosyl-L-methionine = 5-methyluridine(341) in tmRNA + S-adenosyl-L-homocysteine + H(+). Its function is as follows. Dual-specificity methyltransferase that catalyzes the formation of 5-methyluridine at position 54 (m5U54) in all tRNAs, and that of position 341 (m5U341) in tmRNA (transfer-mRNA). The polypeptide is tRNA/tmRNA (uracil-C(5))-methyltransferase (Escherichia coli O157:H7 (strain EC4115 / EHEC)).